The primary structure comprises 139 residues: Putative pre-16S rRNA nuclease (139 aa).

Belongs to the YqgF nuclease family.

Its subcellular location is the cytoplasm. Could be a nuclease involved in processing of the 5'-end of pre-16S rRNA. In Streptococcus pyogenes serotype M49 (strain NZ131), this protein is Putative pre-16S rRNA nuclease.